Consider the following 185-residue polypeptide: NAD(P)H-quinone oxidoreductase subunit J (185 aa).

It belongs to the complex I 30 kDa subunit family. As to quaternary structure, NDH-1 can be composed of about 15 different subunits; different subcomplexes with different compositions have been identified which probably have different functions.

Its subcellular location is the cellular thylakoid membrane. It carries out the reaction a plastoquinone + NADH + (n+1) H(+)(in) = a plastoquinol + NAD(+) + n H(+)(out). It catalyses the reaction a plastoquinone + NADPH + (n+1) H(+)(in) = a plastoquinol + NADP(+) + n H(+)(out). Functionally, NDH-1 shuttles electrons from an unknown electron donor, via FMN and iron-sulfur (Fe-S) centers, to quinones in the respiratory and/or the photosynthetic chain. The immediate electron acceptor for the enzyme in this species is believed to be plastoquinone. Couples the redox reaction to proton translocation, and thus conserves the redox energy in a proton gradient. Cyanobacterial NDH-1 also plays a role in inorganic carbon-concentration. The protein is NAD(P)H-quinone oxidoreductase subunit J of Prochlorococcus marinus (strain MIT 9303).